The following is a 739-amino-acid chain: MFQLELVNVVMHQRKAIEDTMRKKKKQQLHKFEMLPSPYDTAWVAMVPLPGSSSQLPCFPQCVEWILQNQQSNGSWDLNQLDSITKDALLSTLACVLALRRGLLFIGRNFSIAMDEQLAAPIGFNITFPGMLSSVIEMGLEVPIGQTDVERVLHLQETELKREYEENYRGRNTYMAYVSEGLGNAQDWNEVMNFQRKNGSLFNSLSITAAVLVHNYDAKAHRYLNLLLNKFGTAVYTKNIHRQLSMLDALENMGISRHFDGEIKSILDMTYSCWLQRDEEVMLDITTCAMAFRILRMNGYDVSSDDLCHIAEVSDFHSSHQGYLSDTRTLLELYKASEVSVADNEFILDRIGSWSGRLLKEQLSSGALQRTSSIFEEVEHALDCPFYATLDRLVHKRNIEHFAAMSYISYAQNNIPDELERIDSWVKENRLHELKFARQKSAYFYLSAAGTVFDPEMSDARIWWAINGVLTTVVDDFFDVGGSREELENLISLVEMWDEHHKEELYSEQVEIVFFAIFNSVNQLGAKVSAVQGRDVTKHLIEIWLDLLRSMMTEVEWRISNYVPTPEEYMENAAMTFALGPIVLPALYLVGPKIPESVVRDSEYNELFRLMSTCGRLLNDVQTYEREDGEGKVNSVSLLVIQSGGSVSIEEARREIMKPIERCRRELLGLVLRRGSAVPGPCKELFWKMCKVCYFFYSRGDGFSSPTAKSAAVDAVIRDPLDLAAVVASQEPIYIIPAS.

Mg(2+)-binding residues include Asp475, Asp479, Asn619, Thr623, and Glu627. Residues 475–479 (DDFFD) carry the DDXXD motif motif.

Belongs to the terpene synthase family. The cofactor is Mg(2+). As to expression, expressed in roots and stems.

This is Ent-kaurene synthase-like 3 (KSL3) from Oryza sativa subsp. japonica (Rice).